We begin with the raw amino-acid sequence, 311 residues long: Heparan sulfate glucosamine 3-O-sulfotransferase 1 (311 aa).

An N-terminal signal peptide occupies residues 1–20 (MTLLLLGAVLLVAQPQLVPS). N52 is a glycosylation site (N-linked (GlcNAc...) asparagine). 3'-phosphoadenylyl sulfate-binding positions include 68 to 72 (KGGTR), R151, and S159. N196, N246, and N253 each carry an N-linked (GlcNAc...) asparagine glycan. Residue Y259 participates in 3'-phosphoadenylyl sulfate binding. Cysteines 260 and 269 form a disulfide. 274–278 (KGRAH) is a binding site for 3'-phosphoadenylyl sulfate.

This sequence belongs to the sulfotransferase 1 family.

Its subcellular location is the golgi apparatus lumen. It catalyses the reaction alpha-D-glucosaminyl-[heparan sulfate](n) + 3'-phosphoadenylyl sulfate = 3-sulfo-alpha-D-glucosaminyl-[heparan sulfate](n) + adenosine 3',5'-bisphosphate + H(+). Functionally, sulfotransferase that utilizes 3'-phospho-5'-adenylyl sulfate (PAPS) to catalyze the transfer of a sulfo group to position 3 of glucosamine residues in heparan. Catalyzes the rate limiting step in the biosynthesis of heparan sulfate (HSact). This modification is a crucial step in the biosynthesis of anticoagulant heparan sulfate as it completes the structure of the antithrombin pentasaccharide binding site. The sequence is that of Heparan sulfate glucosamine 3-O-sulfotransferase 1 (Hs3st1) from Rattus norvegicus (Rat).